Consider the following 114-residue polypeptide: U17-barytoxin-Tl1a (114 aa).

A signal peptide spans 1–20 (MKTIIVFLSLLVLATKFGDA). A propeptide spanning residues 21–74 (NEGVNQEQMKEVIQNEFREDFLNEMAPMSLLQQLEAIESTLLEKEADRNSRQKR) is cleaved from the precursor. Intrachain disulfides connect cysteine 75-cysteine 88, cysteine 82-cysteine 93, and cysteine 87-cysteine 108.

Belongs to the neurotoxin 14 (magi-1) family. 03 (ICK-30-40) subfamily. As to expression, expressed by the venom gland.

The protein resides in the secreted. Ion channel inhibitor. The polypeptide is U17-barytoxin-Tl1a (Trittame loki (Brush-footed trapdoor spider)).